We begin with the raw amino-acid sequence, 473 residues long: Ribulose bisphosphate carboxylase large chain (473 aa).

Asn-116 and Thr-166 together coordinate substrate. Residue Lys-168 is the Proton acceptor of the active site. Lys-170 contributes to the substrate binding site. Mg(2+) contacts are provided by Lys-194, Asp-196, and Glu-197. The residue at position 194 (Lys-194) is an N6-carboxylysine. His-287 (proton acceptor) is an active-site residue. Substrate-binding residues include Arg-288, His-320, and Ser-372.

This sequence belongs to the RuBisCO large chain family. Type I subfamily. As to quaternary structure, heterohexadecamer of 8 large chains and 8 small chains. Requires Mg(2+) as cofactor.

The enzyme catalyses 2 (2R)-3-phosphoglycerate + 2 H(+) = D-ribulose 1,5-bisphosphate + CO2 + H2O. It catalyses the reaction D-ribulose 1,5-bisphosphate + O2 = 2-phosphoglycolate + (2R)-3-phosphoglycerate + 2 H(+). Its function is as follows. RuBisCO catalyzes two reactions: the carboxylation of D-ribulose 1,5-bisphosphate, the primary event in carbon dioxide fixation, as well as the oxidative fragmentation of the pentose substrate. Both reactions occur simultaneously and in competition at the same active site. The polypeptide is Ribulose bisphosphate carboxylase large chain (Nitrosomonas eutropha (strain DSM 101675 / C91 / Nm57)).